A 970-amino-acid polypeptide reads, in one-letter code: Sodium/calcium exchanger 1 (970 aa).

The N-terminal stretch at 1 to 32 is a signal peptide; the sequence is MLRLRLSPTFSVGFHLLAFVPLLFSHVDLISA. The Extracellular segment spans residues 33-71; that stretch reads DTEMEGEGNETGECTGSYYCKKGVILPIWEPQDPSFGDK. N-linked (GlcNAc...) asparagine glycosylation is present at asparagine 41. A helical membrane pass occupies residues 72 to 92; the sequence is IARATVYFVAMVYMFLGVSII. The Cytoplasmic segment spans residues 93 to 133; sequence ADRFMSSIEVITSQEKEITIKKPNGETTKTTVRIWNETVSN. The chain crosses the membrane as a helical span at residues 134–154; the sequence is LTLMALGSSAPEILLSVIEVC. An Alpha-1 repeat occupies 138 to 178; the sequence is ALGSSAPEILLSVIEVCGHNFTAGDLGPSTIVGSAAFNMFI. The Extracellular segment spans residues 155 to 167; sequence GHNFTAGDLGPST. N-linked (GlcNAc...) asparagine glycosylation occurs at asparagine 157. A helical membrane pass occupies residues 168-188; the sequence is IVGSAAFNMFIIIALCVYVVP. Residues 189-201 lie on the Cytoplasmic side of the membrane; that stretch reads DGETRKIKHLRVF. Residues 202–222 form a helical membrane-spanning segment; that stretch reads FVTAAWSIFAYTWLYIILSVI. The Extracellular segment spans residues 223 to 228; that stretch reads SPGVVE. Residues 229 to 249 traverse the membrane as a helical segment; the sequence is VWEGLLTFFFFPICVVFAWVA. At 250-797 the chain is on the cytoplasmic side; it reads DRRLLFYKYV…FVPPTEYWNG (548 aa). Residues 251–270 are putative calmodulin-binding region; that stretch reads RRLLFYKYVYKRYRAGKQRG. Serine 282 and serine 389 each carry phosphoserine. 2 Calx-beta domains span residues 393 to 493 and 524 to 624; these read VNTE…VHLS and ATVT…LEIG. Ca(2+) contacts are provided by glutamate 417, aspartate 453, aspartate 478, aspartate 479, isoleucine 481, glutamate 483, glutamate 486, aspartate 530, aspartate 531, aspartate 532, glutamate 548, aspartate 584, aspartate 610, glutamate 611, glutamate 612, and glutamate 715. Residues 798 to 818 traverse the membrane as a helical segment; it reads WACFIVSILMIGILTAFIGDL. Over 819–821 the chain is Extracellular; that stretch reads ASH. The chain crosses the membrane as a helical span at residues 822–842; the sequence is FGCTIGLKDSVTAVVFVALGT. The Alpha-2 repeat unit spans residues 839–875; it reads ALGTSVPDTFASKVAATQDQYADASIGNVTGSNAVNV. Residues 843–871 are Cytoplasmic-facing; it reads SVPDTFASKVAATQDQYADASIGNVTGSN. The helical transmembrane segment at 872–892 threads the bilayer; that stretch reads AVNVFLGIGVAWSIAAIYHAA. Over 893-903 the chain is Extracellular; sequence NGEQFKVSPGT. The chain crosses the membrane as a helical span at residues 904-924; it reads LAFSVTLFTIFAFINVGVLLY. The Cytoplasmic portion of the chain corresponds to 925-941; that stretch reads RRRPEIGGELGGPRTAK. The helical transmembrane segment at 942–962 threads the bilayer; the sequence is LLTSCLFVLLWLLYIFFSSLE. The Extracellular portion of the chain corresponds to 963–970; that stretch reads AYCHIKGF.

This sequence belongs to the Ca(2+):cation antiporter (CaCA) (TC 2.A.19) family. SLC8 subfamily. As to expression, detected in heart (at protein level). Detected in heart.

The protein resides in the cell membrane. It carries out the reaction Ca(2+)(in) + 3 Na(+)(out) = Ca(2+)(out) + 3 Na(+)(in). With respect to regulation, activated by micromolar levels of Ca(2+). In terms of biological role, mediates the exchange of one Ca(2+) ion against three to four Na(+) ions across the cell membrane, and thereby contributes to the regulation of cytoplasmic Ca(2+) levels and Ca(2+)-dependent cellular processes. Contributes to Ca(2+) transport during excitation-contraction coupling in muscle. In a first phase, voltage-gated channels mediate the rapid increase of cytoplasmic Ca(2+) levels due to release of Ca(2+) stores from the endoplasmic reticulum. SLC8A1 mediates the export of Ca(2+) from the cell during the next phase, so that cytoplasmic Ca(2+) levels rapidly return to baseline. Required for normal embryonic heart development and the onset of heart contractions. The sequence is that of Sodium/calcium exchanger 1 (SLC8A1) from Felis catus (Cat).